The primary structure comprises 111 residues: Large ribosomal subunit protein uL22 (111 aa).

The protein belongs to the universal ribosomal protein uL22 family. Part of the 50S ribosomal subunit.

Functionally, this protein binds specifically to 23S rRNA; its binding is stimulated by other ribosomal proteins, e.g. L4, L17, and L20. It is important during the early stages of 50S assembly. It makes multiple contacts with different domains of the 23S rRNA in the assembled 50S subunit and ribosome. Its function is as follows. The globular domain of the protein is located near the polypeptide exit tunnel on the outside of the subunit, while an extended beta-hairpin is found that lines the wall of the exit tunnel in the center of the 70S ribosome. The sequence is that of Large ribosomal subunit protein uL22 from Legionella pneumophila (strain Lens).